Consider the following 362-residue polypeptide: Probable dual-specificity RNA methyltransferase RlmN (362 aa).

Glu-105 (proton acceptor) is an active-site residue. The region spanning 111–344 (HEYGNSICVT…VTIRREQGHD (234 aa)) is the Radical SAM core domain. Cys-118 and Cys-349 form a disulfide bridge. [4Fe-4S] cluster-binding residues include Cys-125, Cys-129, and Cys-132. Residues 175 to 176 (GE), Ser-207, 230 to 232 (SLH), and Asn-306 contribute to the S-adenosyl-L-methionine site. The active-site S-methylcysteine intermediate is Cys-349.

The protein belongs to the radical SAM superfamily. RlmN family. [4Fe-4S] cluster serves as cofactor.

The protein localises to the cytoplasm. The enzyme catalyses adenosine(2503) in 23S rRNA + 2 reduced [2Fe-2S]-[ferredoxin] + 2 S-adenosyl-L-methionine = 2-methyladenosine(2503) in 23S rRNA + 5'-deoxyadenosine + L-methionine + 2 oxidized [2Fe-2S]-[ferredoxin] + S-adenosyl-L-homocysteine. The catalysed reaction is adenosine(37) in tRNA + 2 reduced [2Fe-2S]-[ferredoxin] + 2 S-adenosyl-L-methionine = 2-methyladenosine(37) in tRNA + 5'-deoxyadenosine + L-methionine + 2 oxidized [2Fe-2S]-[ferredoxin] + S-adenosyl-L-homocysteine. Functionally, specifically methylates position 2 of adenine 2503 in 23S rRNA and position 2 of adenine 37 in tRNAs. The chain is Probable dual-specificity RNA methyltransferase RlmN from Bacillus cereus (strain G9842).